A 455-amino-acid polypeptide reads, in one-letter code: Rho GTPase-activating protein 3 (455 aa).

Over residues 1-12 (MTNFSRSKSTGT) the composition is skewed to polar residues. The interval 1-68 (MTNFSRSKST…HASRSGNGSG (68 aa)) is disordered. Over residues 24–33 (GPDKYENIHN) the composition is skewed to basic and acidic residues. Positions 43 to 54 (STTSTDYYDAST) are enriched in low complexity. The segment covering 55–64 (PLSSHASRSG) has biased composition (polar residues). The CRIB domain occupies 105–118 (IGWPTEVKHVSHVT). The Rho-GAP domain occupies 153–331 (KSMQCSYDDR…LILMNLKERE (179 aa)). Disordered stretches follow at residues 342–366 (KQTSDPSEEWESQHSEILSPEKPNN) and 432–455 (FVSNRDEGRKGREAWSSRLSSLPW). A compositionally biased stretch (basic and acidic residues) spans 435-446 (NRDEGRKGREAW).

In terms of tissue distribution, expressed in differentiating xylem cells.

Its subcellular location is the cell membrane. Its function is as follows. Acts as a GTPase activator for the Rac-type GTPase by converting it to an inactive GDP-bound state. Involved in secondary wall pattern formation. In association with ROPGEF4, mediates local activation of ARAC10/ROP11 to initiate the distinct pattern of secondary cell walls in xylem cells. The sequence is that of Rho GTPase-activating protein 3 (ROPGAP3) from Arabidopsis thaliana (Mouse-ear cress).